Consider the following 290-residue polypeptide: uncharacterized protein (290 aa).

The disordered stretch occupies residues 153–178 (EMVPITTSSTTPRSKGDEATSTGAFP). Polar residues predominate over residues 157–178 (ITTSSTTPRSKGDEATSTGAFP). The chain crosses the membrane as a helical span at residues 202–222 (LIAVTLLLGGAAIIVFVIFEV). Residues 246 to 276 (KEEDQKPGTTESQLDSQPEKVKHNVPNSSDS) are disordered. The span at 252-261 (PGTTESQLDS) shows a compositional bias: polar residues.

Its subcellular location is the membrane. This is an uncharacterized protein from Mus musculus (Mouse).